A 444-amino-acid polypeptide reads, in one-letter code: Methylenetetrahydrofolate--tRNA-(uracil-5-)-methyltransferase TrmFO (444 aa).

10 to 15 provides a ligand contact to FAD; that stretch reads GAGLAG.

It belongs to the MnmG family. TrmFO subfamily. FAD is required as a cofactor.

It is found in the cytoplasm. It carries out the reaction uridine(54) in tRNA + (6R)-5,10-methylene-5,6,7,8-tetrahydrofolate + NADH + H(+) = 5-methyluridine(54) in tRNA + (6S)-5,6,7,8-tetrahydrofolate + NAD(+). The catalysed reaction is uridine(54) in tRNA + (6R)-5,10-methylene-5,6,7,8-tetrahydrofolate + NADPH + H(+) = 5-methyluridine(54) in tRNA + (6S)-5,6,7,8-tetrahydrofolate + NADP(+). Functionally, catalyzes the folate-dependent formation of 5-methyl-uridine at position 54 (M-5-U54) in all tRNAs. This chain is Methylenetetrahydrofolate--tRNA-(uracil-5-)-methyltransferase TrmFO, found in Streptococcus agalactiae serotype Ia (strain ATCC 27591 / A909 / CDC SS700).